The sequence spans 296 residues: Thiamine-monophosphate kinase (296 aa).

Residues Asp-32, Thr-46, and Asp-48 each coordinate Mg(2+). Residue Asp-55 participates in substrate binding. Residues Asp-76 and Asp-121 each contribute to the Mg(2+) site. Residues 120–121 (GD) and Arg-144 each bind ATP. Asp-206 lines the Mg(2+) pocket. Ser-208 serves as a coordination point for ATP. Asp-209 lines the Mg(2+) pocket. Tyr-293 is a binding site for substrate.

The protein belongs to the thiamine-monophosphate kinase family.

The enzyme catalyses thiamine phosphate + ATP = thiamine diphosphate + ADP. It functions in the pathway cofactor biosynthesis; thiamine diphosphate biosynthesis; thiamine diphosphate from thiamine phosphate: step 1/1. Catalyzes the ATP-dependent phosphorylation of thiamine-monophosphate (TMP) to form thiamine-pyrophosphate (TPP), the active form of vitamin B1. This is Thiamine-monophosphate kinase from Archaeoglobus fulgidus (strain ATCC 49558 / DSM 4304 / JCM 9628 / NBRC 100126 / VC-16).